Consider the following 428-residue polypeptide: Adenylosuccinate synthetase (428 aa).

GTP contacts are provided by residues 12-18 (GDEGKGK) and 40-42 (GHT). Asp13 acts as the Proton acceptor in catalysis. Positions 13 and 40 each coordinate Mg(2+). IMP contacts are provided by residues 13 to 16 (DEGK), 38 to 41 (NAGH), Thr128, Arg142, Gln223, Thr238, and Arg302. His41 functions as the Proton donor in the catalytic mechanism. 298–304 (VTTGRPR) contributes to the substrate binding site. GTP contacts are provided by residues Arg304, 330–332 (KLD), and 412–414 (GTG).

The protein belongs to the adenylosuccinate synthetase family. Homodimer. Mg(2+) serves as cofactor.

The protein resides in the cytoplasm. It carries out the reaction IMP + L-aspartate + GTP = N(6)-(1,2-dicarboxyethyl)-AMP + GDP + phosphate + 2 H(+). Its pathway is purine metabolism; AMP biosynthesis via de novo pathway; AMP from IMP: step 1/2. Its function is as follows. Plays an important role in the de novo pathway of purine nucleotide biosynthesis. Catalyzes the first committed step in the biosynthesis of AMP from IMP. The polypeptide is Adenylosuccinate synthetase (Bifidobacterium adolescentis (strain ATCC 15703 / DSM 20083 / NCTC 11814 / E194a)).